A 141-amino-acid polypeptide reads, in one-letter code: DUF35 domain-containing scaffold protein (141 aa).

Zn(2+) is bound by residues Cys30, Cys33, Cys44, and Cys47.

Belongs to the scaffold protein DUF35 family. As to quaternary structure, interacts with acetoacetyl-CoA thiolase and HMG-CoA synthase (HMGCS) that catalyzes the first and second step in the mevalonate pathway, respectively.

In terms of biological role, functions as a scaffold to connect the acetoacetyl-CoA thiolase and HMG-CoA synthase (HMGCS) dimers in the channeling thiolase/HMGCS complex, which allows for efficient coupling of the endergonic thiolase reaction with the exergonic HMGCS reaction. The sequence is that of DUF35 domain-containing scaffold protein from Methanocaldococcus jannaschii (strain ATCC 43067 / DSM 2661 / JAL-1 / JCM 10045 / NBRC 100440) (Methanococcus jannaschii).